A 187-amino-acid chain; its full sequence is Choriogonadotropin subunit beta variant 1 (187 aa).

Positions 1–50 are cleaved as a signal peptide; it reads MSTFPVLAEDIPLRERHVKGRVDPHFRAPKMEMFQRLLLLLLLSMGGTWA. 6 disulfides stabilise this stretch: C59–C107, C73–C122, C76–C160, C84–C138, C88–C140, and C143–C150. Residues N63 and N80 are each glycosylated (N-linked (GlcNAc...) asparagine). The interval 161–187 is disordered; sequence DDPRFQDSSSSKAPPPSLPSPSRLPGP. Pro residues predominate over residues 173–187; the sequence is APPPSLPSPSRLPGP.

Belongs to the glycoprotein hormones subunit beta family. As to expression, expressed in placenta, testis and pituitary.

It localises to the secreted. This is Choriogonadotropin subunit beta variant 1 (CGB1) from Homo sapiens (Human).